Here is a 582-residue protein sequence, read N- to C-terminus: WD repeat-containing protein JIP5 (582 aa).

5 WD repeats span residues 27–68 (KYPE…EAQS), 125–168 (RHKG…VLSK), 177–216 (DKNDAITKLVHSTSHPFLLSGTENGDVLVYDSNNMASNQL), 265–310 (DQED…LMDQ), and 373–410 (GPADEVGILDIDYDYRLISAGMDSLKIWSNQEETLNSD). Disordered stretches follow at residues 405-496 (ETLN…DTEL) and 531-582 (TKEQ…FDDL). Composition is skewed to acidic residues over residues 410–438 (DSDDSDSDDSDSDIGSNDSEDSDSDDDDV) and 447–485 (EVNDFSPDSDSETGNDDSDENLEDVADSDSNEDQIENVT). 2 stretches are compositionally biased toward basic and acidic residues: residues 531–540 (TKEQSTKKAD) and 570–582 (QKHEHGIRRFDDL).

The protein belongs to the WD repeat WDR55 family.

The protein localises to the nucleus. It is found in the nucleolus. This Debaryomyces hansenii (strain ATCC 36239 / CBS 767 / BCRC 21394 / JCM 1990 / NBRC 0083 / IGC 2968) (Yeast) protein is WD repeat-containing protein JIP5 (JIP5).